The sequence spans 273 residues: Glutamate 5-kinase (273 aa).

ATP is bound at residue K15. Residues S55, D142, and N158 each contribute to the substrate site. Residues 178-179 (SD) and 220-226 (TGGMLSK) each bind ATP.

The protein belongs to the glutamate 5-kinase family.

It is found in the cytoplasm. The catalysed reaction is L-glutamate + ATP = L-glutamyl 5-phosphate + ADP. Its pathway is amino-acid biosynthesis; L-proline biosynthesis; L-glutamate 5-semialdehyde from L-glutamate: step 1/2. Catalyzes the transfer of a phosphate group to glutamate to form L-glutamate 5-phosphate. In Streptococcus pyogenes serotype M6 (strain ATCC BAA-946 / MGAS10394), this protein is Glutamate 5-kinase.